Consider the following 397-residue polypeptide: Phosphoglycerate kinase (397 aa).

Residues 25–27 (DLN), R41, 64–67 (HLGR), R118, and R151 contribute to the substrate site. ATP is bound by residues K202, E324, and 350–353 (GGDT).

This sequence belongs to the phosphoglycerate kinase family. In terms of assembly, monomer.

It is found in the cytoplasm. The catalysed reaction is (2R)-3-phosphoglycerate + ATP = (2R)-3-phospho-glyceroyl phosphate + ADP. It participates in carbohydrate degradation; glycolysis; pyruvate from D-glyceraldehyde 3-phosphate: step 2/5. The protein is Phosphoglycerate kinase of Paracidovorax citrulli (strain AAC00-1) (Acidovorax citrulli).